The sequence spans 580 residues: G1/S-specific cyclin CLN3 (580 aa).

Residues 454-469 (FTPTSSSSSPSPFNSP) show a composition bias toward low complexity. Disordered stretches follow at residues 454–498 (FTPT…QNSF) and 546–580 (MATAHPCSAPTQLKKRSTSSVDCDFNDSSNLKKTR). Composition is skewed to polar residues over residues 470–480 (YKTSSSMTTPD) and 563–580 (TSSVDCDFNDSSNLKKTR).

This sequence belongs to the cyclin family.

In terms of biological role, essential for the control of the cell cycle at the G1/S (start) transition. CLN3 may be an upstream activator of the G1 cyclins which directly catalyze start. The sequence is that of G1/S-specific cyclin CLN3 (CLN3) from Saccharomyces cerevisiae (strain ATCC 204508 / S288c) (Baker's yeast).